We begin with the raw amino-acid sequence, 596 residues long: Fructan 1-exohydrolase w3 (596 aa).

The N-terminal stretch at 1–20 is a signal peptide; the sequence is MAQAWAFLLPVLVLGSYVTS. Residue aspartate 75 is part of the active site. Asparagine 168, asparagine 236, and asparagine 248 each carry an N-linked (GlcNAc...) asparagine glycan. Cysteine 446 and cysteine 492 are disulfide-bonded.

This sequence belongs to the glycosyl hydrolase 32 family. As to expression, expressed in the stem, particularly the penultimate internode. Little expression is detected in roots and in the peduncle part of the stem.

The catalysed reaction is Hydrolysis of terminal, non-reducing (2-&gt;1)-linked beta-D-fructofuranose residues in fructans.. Its activity is regulated as follows. Inhibited by sucrose. Hydrolyzes inulin-type beta-(2,1)-fructans and beta-(2,1)-linkages in branched fructans. Has low activity against beta-(2,6)-linked fructans. May play a role as a beta-(2,1)-trimmer during graminan biosynthesis. This Triticum aestivum (Wheat) protein is Fructan 1-exohydrolase w3.